The primary structure comprises 738 residues: uncharacterized protein (738 aa).

Over residues 1–10 the composition is skewed to polar residues; sequence MQKKVVQSAS. Disordered stretches follow at residues 1 to 23, 53 to 83, and 219 to 266; these read MQKK…KRSS, EGTH…NPNP, and HQDG…PLST. Residues 55-77 are compositionally biased toward low complexity; it reads THSASVHPSTSSTSHISSPSAFS. Over residues 246 to 266 the composition is skewed to polar residues; the sequence is GSPSPNRSLNVSNNTTPPLST. Residues threonine 260 and threonine 261 each carry the phosphothreonine modification. Positions 292–318 form a DNA-binding region, zn(2)-C6 fungal-type; it reads CAKCQKDNKKCDDARPCQRCIKAKTDC. The segment covering 323-335 has biased composition (basic residues); that stretch reads RKKRPTGVRRGPY. Disordered stretches follow at residues 323–372 and 441–464; these read RKKR…SDNQ and DETG…SFTN. Positions 340–352 are enriched in low complexity; it reads DTSNNTKSTTASS. The segment covering 353 to 372 has biased composition (polar residues); it reads GHSTQDSLSSKMLDPSSDNQ.

The protein localises to the cytoplasm. It localises to the nucleus. This is an uncharacterized protein from Schizosaccharomyces pombe (strain 972 / ATCC 24843) (Fission yeast).